We begin with the raw amino-acid sequence, 128 residues long: uncharacterized protein (128 aa).

The disordered stretch occupies residues 1-26 (MNSATSETTTNTGAAETTTSTGAAET). A helical membrane pass occupies residues 105–127 (IANGLLTNNGISVFISTVLLAIV).

Belongs to the flocculin family.

The protein resides in the membrane. This is an uncharacterized protein from Saccharomyces cerevisiae (strain ATCC 204508 / S288c) (Baker's yeast).